Here is a 435-residue protein sequence, read N- to C-terminus: tRNA(Ile)-lysidine synthase (435 aa).

Residue 23-28 (SGGMDS) participates in ATP binding.

Belongs to the tRNA(Ile)-lysidine synthase family.

The protein resides in the cytoplasm. The enzyme catalyses cytidine(34) in tRNA(Ile2) + L-lysine + ATP = lysidine(34) in tRNA(Ile2) + AMP + diphosphate + H(+). In terms of biological role, ligates lysine onto the cytidine present at position 34 of the AUA codon-specific tRNA(Ile) that contains the anticodon CAU, in an ATP-dependent manner. Cytidine is converted to lysidine, thus changing the amino acid specificity of the tRNA from methionine to isoleucine. The chain is tRNA(Ile)-lysidine synthase from Xanthomonas campestris pv. campestris (strain 8004).